The primary structure comprises 560 residues: Arginine--tRNA ligase (560 aa).

Residues 164-174 (FYYNDAGNQID) carry the 'HIGH' region motif.

The protein belongs to the class-I aminoacyl-tRNA synthetase family. As to quaternary structure, monomer.

Its subcellular location is the cytoplasm. The catalysed reaction is tRNA(Arg) + L-arginine + ATP = L-arginyl-tRNA(Arg) + AMP + diphosphate. This is Arginine--tRNA ligase from Bordetella pertussis (strain Tohama I / ATCC BAA-589 / NCTC 13251).